The primary structure comprises 152 residues: Transcriptional repressor NrdR (152 aa).

A zinc finger spans residues 3 to 34; it reads CPYCNASDTKVIDSRLAAEGAQVRRRRSCNSC. Residues 49-139 form the ATP-cone domain; that stretch reads PRIIKSSGKI…VYRDFQDIDA (91 aa).

The protein belongs to the NrdR family. Zn(2+) is required as a cofactor.

Its function is as follows. Negatively regulates transcription of bacterial ribonucleotide reductase nrd genes and operons by binding to NrdR-boxes. In Psychrobacter arcticus (strain DSM 17307 / VKM B-2377 / 273-4), this protein is Transcriptional repressor NrdR.